Reading from the N-terminus, the 356-residue chain is DNA polymerase IV (356 aa).

The 182-residue stretch at 6–187 folds into the UmuC domain; the sequence is IIHIDMDYFF…LDIGDFPGVG (182 aa). Positions 10 and 105 each coordinate Mg(2+). The active site involves E106.

It belongs to the DNA polymerase type-Y family. Monomer. The cofactor is Mg(2+).

It localises to the cytoplasm. It catalyses the reaction DNA(n) + a 2'-deoxyribonucleoside 5'-triphosphate = DNA(n+1) + diphosphate. Functionally, poorly processive, error-prone DNA polymerase involved in untargeted mutagenesis. Copies undamaged DNA at stalled replication forks, which arise in vivo from mismatched or misaligned primer ends. These misaligned primers can be extended by PolIV. Exhibits no 3'-5' exonuclease (proofreading) activity. May be involved in translesional synthesis, in conjunction with the beta clamp from PolIII. This Staphylococcus aureus (strain Mu50 / ATCC 700699) protein is DNA polymerase IV.